The sequence spans 432 residues: ATP-dependent RNA helicase RhlB (432 aa).

Positions 9–37 (QNFADLGLQPQVIDGLNAKGFIKCTPIQA) match the Q motif motif. Residues 40–219 (LPVLLAGQDI…FEHMQEPEHV (180 aa)) enclose the Helicase ATP-binding domain. 53–60 (AQTGTGKT) contributes to the ATP binding site. The DEAD box motif lies at 165–168 (DEAD). One can recognise a Helicase C-terminal domain in the interval 245-390 (ALLQTLIEEE…QSDYDASALL (146 aa)). The tract at residues 396–432 (PLRLQRRPQQNRRNNNGQRQGGNRKHTRPRQPRNTQS) is disordered. Positions 417–426 (GNRKHTRPRQ) are enriched in basic residues.

Belongs to the DEAD box helicase family. RhlB subfamily. Component of the RNA degradosome, which is a multiprotein complex involved in RNA processing and mRNA degradation.

The protein resides in the cytoplasm. It catalyses the reaction ATP + H2O = ADP + phosphate + H(+). Functionally, DEAD-box RNA helicase involved in RNA degradation. Has RNA-dependent ATPase activity and unwinds double-stranded RNA. This chain is ATP-dependent RNA helicase RhlB, found in Aliivibrio fischeri (strain ATCC 700601 / ES114) (Vibrio fischeri).